A 745-amino-acid polypeptide reads, in one-letter code: 5-methyltetrahydropteroyltriglutamate--homocysteine methyltransferase (745 aa).

5-methyltetrahydropteroyltri-L-glutamate-binding positions include 19–22 and Lys119; that span reads RELK. L-homocysteine contacts are provided by residues 418–420 and Glu471; that span reads IGS. L-methionine-binding positions include 418 to 420 and Glu471; that span reads IGS. 5-methyltetrahydropteroyltri-L-glutamate-binding positions include 502-503 and Trp548; that span reads RC. An L-homocysteine-binding site is contributed by Asp586. Residue Asp586 coordinates L-methionine. Residue Glu592 participates in 5-methyltetrahydropteroyltri-L-glutamate binding. Zn(2+) contacts are provided by His628, Cys630, and Glu652. Residue His681 is the Proton donor of the active site. Cys713 lines the Zn(2+) pocket.

This sequence belongs to the vitamin-B12 independent methionine synthase family. The cofactor is Zn(2+).

It catalyses the reaction 5-methyltetrahydropteroyltri-L-glutamate + L-homocysteine = tetrahydropteroyltri-L-glutamate + L-methionine. It functions in the pathway amino-acid biosynthesis; L-methionine biosynthesis via de novo pathway; L-methionine from L-homocysteine (MetE route): step 1/1. Catalyzes the transfer of a methyl group from 5-methyltetrahydrofolate to homocysteine resulting in methionine formation. The chain is 5-methyltetrahydropteroyltriglutamate--homocysteine methyltransferase from Corynebacterium glutamicum (strain R).